The sequence spans 374 residues: MDLEKTRDNLKNNVFGRFFLYVLSKGYELGTIVNKFLYENGWRKSYSVNTRVVCVGNITAGGTGKTTAVLLAARTLAEAGIRTAIISRGYKRDKKNKNPVVLFDDELENNWVTAGDEPFMMSRALADVKVPIVIHEDRHLAATEALKRFKSQVLLLDDGFQHFRLKRDANIVLIDARNPFGGGQLLPYGTLREGLSGLKRANLVLLTHSNQADQRKKEDIKDQIRLQNEDIEILEAVHQPEHYFDICNSVKVPLNHLKGEAGVFSAIGEPGGFEDTLKDLGLKLVKVWRYPDHRRYTEEDLKTFVDLAGENPLVTTFKDFVKFPENWRDILKKNVYVLSVSMKIKGKKEFDIFAEALYPKFTNLNVKKESKSRK.

59–66 (TAGGTGKT) lines the ATP pocket.

This sequence belongs to the LpxK family.

It catalyses the reaction a lipid A disaccharide + ATP = a lipid IVA + ADP + H(+). It functions in the pathway glycolipid biosynthesis; lipid IV(A) biosynthesis; lipid IV(A) from (3R)-3-hydroxytetradecanoyl-[acyl-carrier-protein] and UDP-N-acetyl-alpha-D-glucosamine: step 6/6. Its function is as follows. Transfers the gamma-phosphate of ATP to the 4'-position of a tetraacyldisaccharide 1-phosphate intermediate (termed DS-1-P) to form tetraacyldisaccharide 1,4'-bis-phosphate (lipid IVA). In Elusimicrobium minutum (strain Pei191), this protein is Tetraacyldisaccharide 4'-kinase.